We begin with the raw amino-acid sequence, 468 residues long: ATP synthase subunit beta (468 aa).

148-155 (GGAGVGKT) contacts ATP.

It belongs to the ATPase alpha/beta chains family. As to quaternary structure, F-type ATPases have 2 components, CF(1) - the catalytic core - and CF(0) - the membrane proton channel. CF(1) has five subunits: alpha(3), beta(3), gamma(1), delta(1), epsilon(1). CF(0) has three main subunits: a(1), b(2) and c(9-12). The alpha and beta chains form an alternating ring which encloses part of the gamma chain. CF(1) is attached to CF(0) by a central stalk formed by the gamma and epsilon chains, while a peripheral stalk is formed by the delta and b chains.

It localises to the cell inner membrane. The enzyme catalyses ATP + H2O + 4 H(+)(in) = ADP + phosphate + 5 H(+)(out). Its function is as follows. Produces ATP from ADP in the presence of a proton gradient across the membrane. The catalytic sites are hosted primarily by the beta subunits. The chain is ATP synthase subunit beta from Xanthomonas campestris pv. campestris (strain B100).